The following is a 256-amino-acid chain: Leucine-rich repeat-containing protein 18 (256 aa).

LRR repeat units lie at residues Gly-28–Leu-49, Glu-51–Phe-72, Asn-74–Met-95, Ser-97–Asn-118, Asn-122–Lys-144, Glu-145–Pro-167, Lys-168–Val-189, and Arg-194–Gln-215.

Its subcellular location is the cytoplasm. May be involved in the regulation of spermatogenesis and sperm maturation. The chain is Leucine-rich repeat-containing protein 18 (Lrrc18) from Rattus norvegicus (Rat).